The primary structure comprises 812 residues: Axin-2 (812 aa).

The segment at 1–43 (MNRTLTDPMVSSFREDDPRPPVPGEEGETTCHHPSKLAMMRPK) is disordered. One can recognise an RGS domain in the interval 84–203 (SLHFLLGDQD…LTSDIYLEYV (120 aa)). 4 disordered regions span residues 275 to 326 (SYRR…AIPP), 388 to 430 (ETMS…TCEE), 446 to 484 (TPGC…SSMN), and 609 to 726 (RQTK…SGCH). Over residues 285–303 (NRFTSGYSFAPATSANDSE) the composition is skewed to polar residues. Residues 305-323 (SSDALTDDSMSMTDSSVDA) are compositionally biased toward low complexity. The tract at residues 329-415 (LGSKKQLQRE…RDESEMSSSS (87 aa)) is interaction with GSK3B. The span at 388–397 (ETMSSLEERL) shows a compositional bias: basic and acidic residues. The span at 401-410 (QEEEERDESE) shows a compositional bias: acidic residues. Over residues 411 to 421 (MSSSSASHSLP) the composition is skewed to low complexity. An interaction with beta-catenin region spans residues 415–467 (SASHSLPLLPPGTCEEDPQAILDEHLSRVLKTPGCQSPGLLRHSPRSRSPEQR). Residues 475-484 (STRSQSSSMN) show a composition bias toward polar residues. Residues 672 to 683 (EEARRRLEEVSK) are compositionally biased toward basic and acidic residues. Residues 730–812 (GSETVVTYFF…KILGKVDRMD (83 aa)) form the DIX domain.

In terms of assembly, interacts with hwa; leading to promote the tankyrase-mediated degradation of axin1. In terms of processing, ADP-ribosylated by tankyrase tnks and tnks2. Poly-ADP-ribosylated protein is recognized by rnf146, followed by ubiquitination and subsequent activation of the Wnt signaling pathway. Ubiquitinated by rnf146 when poly-ADP-ribosylated, leading to its degradation and subsequent activation of the Wnt signaling pathway.

The protein resides in the cytoplasm. Component of the beta-catenin destruction complex required for regulating ctnnb1 levels through phosphorylation and ubiquitination, and modulating Wnt-signaling. Controls dorsoventral patterning by down-regulating ctnnb1 to inhibit the Wnt signaling pathway and ventralize embryos. This is Axin-2 (axin2) from Danio rerio (Zebrafish).